A 131-amino-acid polypeptide reads, in one-letter code: Con-Ins Q1b (131 aa).

The signal sequence occupies residues 1 to 24 (MTTSSYFLLVALGLLLYLCQSSFG). Cystine bridges form between C29–C107, C41–C110, C53–C123, and C109–C114. A propeptide spans 59–92 (LQGGTDDARKKRGRASLLRKRRGFLSMLKARAKR) (c peptide). E118 carries the post-translational modification 4-carboxyglutamate; partial. Serine amide is present on S130.

Belongs to the insulin family. As to quaternary structure, heterodimer of A and B chains; disulfide-linked. In terms of tissue distribution, expressed by the venom gland.

It is found in the secreted. In terms of biological role, this venom insulin facilitates prey capture by rapidly inducing hypoglycemic shock. Intraperitoneal injection of this peptide into zebrafish lowers blood glucose with the same potency than human insulin. In vivo, when applied to water, this peptide reduces overall locomotor activity of zebrafish larvae, observed as a significant decrease in the percentage of time spent swimming and movement frequency. In Conus quercinus (Oak cone), this protein is Con-Ins Q1b.